The primary structure comprises 72 residues: Translation initiation factor IF-1 (72 aa).

Positions 1–72 constitute an S1-like domain; sequence MSKQTAIEQD…TKGRISFRYK (72 aa).

Belongs to the IF-1 family. In terms of assembly, component of the 30S ribosomal translation pre-initiation complex which assembles on the 30S ribosome in the order IF-2 and IF-3, IF-1 and N-formylmethionyl-tRNA(fMet); mRNA recruitment can occur at any time during PIC assembly.

The protein resides in the cytoplasm. Its function is as follows. One of the essential components for the initiation of protein synthesis. Stabilizes the binding of IF-2 and IF-3 on the 30S subunit to which N-formylmethionyl-tRNA(fMet) subsequently binds. Helps modulate mRNA selection, yielding the 30S pre-initiation complex (PIC). Upon addition of the 50S ribosomal subunit IF-1, IF-2 and IF-3 are released leaving the mature 70S translation initiation complex. In Porphyromonas gingivalis (strain ATCC BAA-308 / W83), this protein is Translation initiation factor IF-1.